The following is an 893-amino-acid chain: Translation initiation factor IF-2 (893 aa).

Disordered regions lie at residues Lys-51–Glu-203 and Glu-216–His-300. Basic and acidic residues-rich tracts occupy residues Ala-102–Glu-203, Glu-216–Tyr-238, and His-245–Pro-261. One can recognise a tr-type G domain in the interval Gly-392–Thr-561. Residues Gly-401–Thr-408 are G1. Residue Gly-401 to Thr-408 participates in GTP binding. Residues Gly-426–His-430 form a G2 region. The interval Asp-447–Gly-450 is G3. Residues Asp-447–His-451 and Asn-501–Asp-504 each bind GTP. The interval Asn-501–Asp-504 is G4. Positions Ser-537–Lys-539 are G5.

It belongs to the TRAFAC class translation factor GTPase superfamily. Classic translation factor GTPase family. IF-2 subfamily.

The protein resides in the cytoplasm. Functionally, one of the essential components for the initiation of protein synthesis. Protects formylmethionyl-tRNA from spontaneous hydrolysis and promotes its binding to the 30S ribosomal subunits. Also involved in the hydrolysis of GTP during the formation of the 70S ribosomal complex. The chain is Translation initiation factor IF-2 from Aliivibrio fischeri (strain MJ11) (Vibrio fischeri).